The following is an 83-amino-acid chain: Beta-toxin Ct25 (83 aa).

Positions 1–18 (MKVLILIIASVLLIGVEC) are cleaved as a signal peptide. The 63-residue stretch at 19–81 (KDGYPKNSEG…VWDSATNKCG (63 aa)) folds into the LCN-type CS-alpha/beta domain. 4 disulfides stabilise this stretch: Cys29–Cys80, Cys33–Cys54, Cys40–Cys61, and Cys44–Cys63. A Glycine amide modification is found at Gly81.

The protein belongs to the long (4 C-C) scorpion toxin superfamily. Sodium channel inhibitor family. Beta subfamily. In terms of tissue distribution, expressed by the venom gland.

It is found in the secreted. Its function is as follows. Beta toxins bind voltage-independently at site-4 of sodium channels (Nav) and shift the voltage of activation toward more negative potentials thereby affecting sodium channel activation and promoting spontaneous and repetitive firing. In Centruroides tecomanus (Scorpion), this protein is Beta-toxin Ct25.